The following is a 134-amino-acid chain: Large ribosomal subunit protein bL17 (134 aa).

This sequence belongs to the bacterial ribosomal protein bL17 family. As to quaternary structure, part of the 50S ribosomal subunit. Contacts protein L32.

The chain is Large ribosomal subunit protein bL17 from Thioalkalivibrio sulfidiphilus (strain HL-EbGR7).